A 668-amino-acid polypeptide reads, in one-letter code: Packaging protein UL32 homolog (668 aa).

Over residues 1–10 the composition is skewed to polar residues; the sequence is MNPSTHVSSN. The tract at residues 1-35 is disordered; the sequence is MNPSTHVSSNGPTTPPHGPHTTFLPPTSPAPSTSS. Over residues 19–35 the composition is skewed to low complexity; it reads PHTTFLPPTSPAPSTSS. 4 residues coordinate Zn(2+): C200, C203, H276, and C282. A zinc finger 1 region spans residues 200-282; the sequence is CNLCAIISIC…FHLHFFINRC (83 aa). The tract at residues 401–430 is disordered; it reads IEEEEDEEGGEKGGDDPGRHNGGGTSGGFS. A compositionally biased stretch (basic and acidic residues) spans 410–419; sequence GEKGGDDPGR. Zn(2+) is bound by residues C459, C462, H567, and C574. The segment at 459 to 574 is zinc finger 2; it reads CLLCELMACS…YKHFFCDPQC (116 aa).

This sequence belongs to the herpesviridae UL32 protein family.

It localises to the host cytoplasm. Its subcellular location is the host nucleus. In terms of biological role, plays a role in efficient localization of neo-synthesized capsids to nuclear replication compartments, thereby controlling cleavage and packaging of virus genomic DNA. The chain is Packaging protein UL32 homolog (UL52) from Homo sapiens (Human).